Here is a 750-residue protein sequence, read N- to C-terminus: Photosystem I P700 chlorophyll a apoprotein A1 (750 aa).

8 helical membrane passes run 70–93 (VFSA…FHGA), 156–179 (LYCT…FHYH), 195–219 (LNHH…HVSL), 291–309 (IAHH…GHMY), 346–369 (WHAQ…HHMY), 385–411 (LSLF…IFMV), 433–455 (AIIS…LYIH), and 531–549 (FLVH…LILL). The [4Fe-4S] cluster site is built by Cys573 and Cys582. Transmembrane regions (helical) follow at residues 589–610 (HVFL…HFSW) and 664–686 (LSAY…MFLF). Position 675 (His675) interacts with chlorophyll a'. Residues Met683 and Tyr691 each contribute to the chlorophyll a site. Trp692 contacts phylloquinone. The helical transmembrane segment at 724-744 (AVGVTHYLLGGIATTWAFFLA) threads the bilayer.

Belongs to the PsaA/PsaB family. In terms of assembly, the PsaA/B heterodimer binds the P700 chlorophyll special pair and subsequent electron acceptors. PSI consists of a core antenna complex that captures photons, and an electron transfer chain that converts photonic excitation into a charge separation. The eukaryotic PSI reaction center is composed of at least 11 subunits. P700 is a chlorophyll a/chlorophyll a' dimer, A0 is one or more chlorophyll a, A1 is one or both phylloquinones and FX is a shared 4Fe-4S iron-sulfur center. is required as a cofactor.

The protein resides in the plastid. The protein localises to the chloroplast thylakoid membrane. The catalysed reaction is reduced [plastocyanin] + hnu + oxidized [2Fe-2S]-[ferredoxin] = oxidized [plastocyanin] + reduced [2Fe-2S]-[ferredoxin]. Functionally, psaA and PsaB bind P700, the primary electron donor of photosystem I (PSI), as well as the electron acceptors A0, A1 and FX. PSI is a plastocyanin-ferredoxin oxidoreductase, converting photonic excitation into a charge separation, which transfers an electron from the donor P700 chlorophyll pair to the spectroscopically characterized acceptors A0, A1, FX, FA and FB in turn. Oxidized P700 is reduced on the lumenal side of the thylakoid membrane by plastocyanin. The polypeptide is Photosystem I P700 chlorophyll a apoprotein A1 (Amborella trichopoda).